The chain runs to 97 residues: Non-pathogenic pore-forming peptide amoebapore A (97 aa).

A signal peptide spans 1-20 (MKAIVFVLIFAVAFAVTLRQ). The Saposin B-type domain maps to 21–97 (GPIVCNLCTG…NAICAKIHAC (77 aa)). Intrachain disulfides connect C25/C97, C28/C91, and C55/C66.

Monomer. Homodimer. Hexamer; formed during insertion in the membrane.

Its subcellular location is the cytoplasmic granule. Functionally, forms pores in the cell membrane of host cells. Implicated in the cytolytic activity of the parasite. Pore forming activity is lower compared to the activity of ameobapore A from the pathogenic strain HM-1:IMSS. This is Non-pathogenic pore-forming peptide amoebapore A from Entamoeba histolytica.